A 214-amino-acid chain; its full sequence is Octanoyltransferase (214 aa).

One can recognise a BPL/LPL catalytic domain in the interval 28-203 (GSGAETLLLL…RFEGFLDEFM (176 aa)). Substrate-binding positions include 66 to 73 (RGGDVTYH), 133 to 135 (SIG), and 146 to 148 (GFA). Residue Cys-164 is the Acyl-thioester intermediate of the active site.

It belongs to the LipB family.

The protein resides in the cytoplasm. It carries out the reaction octanoyl-[ACP] + L-lysyl-[protein] = N(6)-octanoyl-L-lysyl-[protein] + holo-[ACP] + H(+). It participates in protein modification; protein lipoylation via endogenous pathway; protein N(6)-(lipoyl)lysine from octanoyl-[acyl-carrier-protein]: step 1/2. In terms of biological role, catalyzes the transfer of endogenously produced octanoic acid from octanoyl-acyl-carrier-protein onto the lipoyl domains of lipoate-dependent enzymes. Lipoyl-ACP can also act as a substrate although octanoyl-ACP is likely to be the physiological substrate. This chain is Octanoyltransferase, found in Geotalea uraniireducens (strain Rf4) (Geobacter uraniireducens).